We begin with the raw amino-acid sequence, 160 residues long: Transcription elongation factor GreA (160 aa).

The stretch at 1-72 (MAEKTYPMTL…QISSLETKIR (72 aa)) forms a coiled coil.

The protein belongs to the GreA/GreB family.

Functionally, necessary for efficient RNA polymerase transcription elongation past template-encoded arresting sites. The arresting sites in DNA have the property of trapping a certain fraction of elongating RNA polymerases that pass through, resulting in locked ternary complexes. Cleavage of the nascent transcript by cleavage factors such as GreA or GreB allows the resumption of elongation from the new 3'terminus. GreA releases sequences of 2 to 3 nucleotides. The sequence is that of Transcription elongation factor GreA from Streptococcus pneumoniae (strain ATCC 700669 / Spain 23F-1).